Here is a 203-residue protein sequence, read N- to C-terminus: Small ribosomal subunit protein uS4 (203 aa).

Residues 93–156 (RRLDNVVYRL…LKVPAILEAV (64 aa)) enclose the S4 RNA-binding domain.

It belongs to the universal ribosomal protein uS4 family. Part of the 30S ribosomal subunit. Contacts protein S5. The interaction surface between S4 and S5 is involved in control of translational fidelity.

Functionally, one of the primary rRNA binding proteins, it binds directly to 16S rRNA where it nucleates assembly of the body of the 30S subunit. Its function is as follows. With S5 and S12 plays an important role in translational accuracy. The polypeptide is Small ribosomal subunit protein uS4 (Streptococcus gordonii (strain Challis / ATCC 35105 / BCRC 15272 / CH1 / DL1 / V288)).